The following is a 293-amino-acid chain: SAGA-associated factor 29 (293 aa).

Residues 3–86 (LVSADSRIAE…LRKALDKIAE (84 aa)) are a coiled coil. One can recognise an SGF29 C-terminal domain in the interval 152–293 (GDYVAKPGDK…VVACKEPKKK (142 aa)). Histone H3K4me3 N-terminus binding regions lie at residues 194-196 (DID) and 240-243 (QTTC). The interval 264 to 266 (FED) is histone H3K4me3 binding. K288 carries the post-translational modification N6-acetyllysine.

The protein belongs to the SGF29 family. In terms of assembly, interacts with dimethylated and trimethylated 'Lys-4' of histone H3 (H3K4me2 and H3K4me3), with a preference for the trimethylated form (H3K4me3). Component of some SAGA-type complexes. Component of the ADA2A-containing complex (ATAC), composed of KAT14, KAT2A, TADA2L, TADA3L, ZZ3, MBIP, WDR5, YEATS2, CCDC101 and DR1. Interacts with (methylated) CGAS. Interacts with TADA3L, GCN5L2, SUPT3H and MYC.

The protein resides in the nucleus. Functionally, chromatin reader component of some histone acetyltransferase (HAT) SAGA-type complexes like the TFTC-HAT, ATAC or STAGA complexes. SGF29 specifically recognizes and binds methylated 'Lys-4' of histone H3 (H3K4me), with a preference for trimethylated form (H3K4me3). In the SAGA-type complexes, SGF29 is required to recruit complexes to H3K4me. Involved in the response to endoplasmic reticulum (ER) stress by recruiting the SAGA complex to H3K4me, thereby promoting histone H3 acetylation and cell survival. Also binds non-histone proteins that are methylated on Lys residues: specifically recognizes and binds CGAS monomethylated on 'Lys-491'. This Mus musculus (Mouse) protein is SAGA-associated factor 29.